Reading from the N-terminus, the 253-residue chain is HTH-type transcriptional repressor DasR (253 aa).

The HTH gntR-type domain occupies 16 to 86; it reads RAQRVPKYYR…QGKGTFVAKP (71 aa). The H-T-H motif DNA-binding region spans 46 to 65; it reads ERTLAAEFDTSRTTVPQALQ.

The protein localises to the cytoplasm. Functionally, global regulator that is part of the nutrient-sensing system. In the absence of glucosamine 6-P (GlcN6P), represses the phosphotransferase system (PTS) specific for the uptake of N-acetylglucosamine (PTSNag), and genes involved in the metabolism of chitin, as well as several genes involved in development, thereby linking carbon availability to morphogenesis. Regulates the dasABC transport operon involved in glucose-related morphogenesis. Essential for development. This chain is HTH-type transcriptional repressor DasR (dasR), found in Streptomyces griseus.